Reading from the N-terminus, the 404-residue chain is Alanine racemase (404 aa).

Residue lysine 34 is the Proton acceptor; specific for D-alanine of the active site. Lysine 34 is subject to N6-(pyridoxal phosphate)lysine. Arginine 133 is a binding site for substrate. Residues 226 to 273 form the RPE1 insert domain; sequence EVSSNLSYTEEFESNTAALTTTACINKCPDVSVRLTPKLPLKGSYTVR. The active-site Proton acceptor; specific for L-alanine is the tyrosine 298. Methionine 346 lines the substrate pocket.

This sequence belongs to the alanine racemase family. Pyridoxal 5'-phosphate serves as cofactor.

It catalyses the reaction L-alanine = D-alanine. The protein operates within amino-acid biosynthesis; D-alanine biosynthesis; D-alanine from L-alanine: step 1/1. Functionally, catalyzes the interconversion of L-alanine and D-alanine. May also act on other amino acids. In Rickettsia prowazekii (strain Madrid E), this protein is Alanine racemase (alr).